Here is a 282-residue protein sequence, read N- to C-terminus: Ribosome biogenesis GTPase A (282 aa).

One can recognise a CP-type G domain in the interval 14–178 (RREVTEKLKL…LLDTPGILWP (165 aa)). GTP is bound by residues 58-61 (NKAD), 86-87 (NS), 130-135 (NVGKST), and glycine 174.

It belongs to the TRAFAC class YlqF/YawG GTPase family. MTG1 subfamily. As to quaternary structure, interacts with ctc. Interacts with the immature 50S ribosome subunit. 2 molecules of rbgA bind to one 50S subunit.

It is found in the cytoplasm. In terms of biological role, essential protein that is required for a late step of 50S ribosomal subunit assembly. Has GTPase activity that is stimulated by interaction with the immature 50S ribosome subunit. Binds to the 23S rRNA. Required for the association of ribosomal proteins rplP and rpmA with the large subunit. In Bacillus pumilus (strain SAFR-032), this protein is Ribosome biogenesis GTPase A.